Here is a 466-residue protein sequence, read N- to C-terminus: MIPVTSFAGKTVAVFGLGGSGLASCHALKAGGAEVIAGDDNADNLAKVAQAGFITADLRNVSWVNFAALVLAPGVPLTHPKPHWSVLAARQAGVEVIGDIELFCRERARHAPDAPFVAITGTNGKSTTTALVAHLMREAGHDVQMGGNIGTAILSLEPPRKGRVHVIEMSSYQIDLTPSLDPTVGILLNVSPDHLDRHGTIEHYAAVKERLIAAVQPHGTAVVGVDDIWSRTAADRIEQAGKRVVRVSVKRPLADGISVDHDRIVRASGGAQAEIADIGGIGSLRGRHNAQNAACASAAALALGVGRDILQQDLRSFPGLAHRMEQVGRKANVLFVNDSKGTNADATEKALSSFAEIFWIAGGKPKSGGIAPLAELFPRIRKAYLIGEAAEEFAGTLEGRVVYEISGTLEAAVPAAARDAEGSGLADAVVLLSPACASFDQFRNFEARGDRFRELVRALPGVTPVA.

Position 121 to 127 (121 to 127 (GTNGKST)) interacts with ATP.

It belongs to the MurCDEF family.

It is found in the cytoplasm. It catalyses the reaction UDP-N-acetyl-alpha-D-muramoyl-L-alanine + D-glutamate + ATP = UDP-N-acetyl-alpha-D-muramoyl-L-alanyl-D-glutamate + ADP + phosphate + H(+). It functions in the pathway cell wall biogenesis; peptidoglycan biosynthesis. In terms of biological role, cell wall formation. Catalyzes the addition of glutamate to the nucleotide precursor UDP-N-acetylmuramoyl-L-alanine (UMA). This chain is UDP-N-acetylmuramoylalanine--D-glutamate ligase, found in Nitrobacter hamburgensis (strain DSM 10229 / NCIMB 13809 / X14).